The sequence spans 520 residues: Amine oxidase [flavin-containing] B (520 aa).

Ser-2 carries the N-acetylserine modification. At 2 to 489 (SNKCDVIVVG…TFLERHLPSV (488 aa)) the chain is on the cytoplasmic side. The residue at position 52 (Lys-52) is an N6-acetyllysine. Residue Cys-397 is modified to S-8alpha-FAD cysteine. The helical; Anchor for type IV membrane protein transmembrane segment at 490-516 (PGLLKLLGLTTILSATALGFLAHKKGL) threads the bilayer. Residues 517-520 (FVRF) are Mitochondrial intermembrane-facing.

This sequence belongs to the flavin monoamine oxidase family. Monomer, homo- or heterodimer (containing two subunits of similar size). Each subunit contains a covalently bound flavin. Enzymatically active as monomer. It depends on FAD as a cofactor.

The protein localises to the mitochondrion outer membrane. It carries out the reaction a secondary aliphatic amine + O2 + H2O = a primary amine + an aldehyde + H2O2. The catalysed reaction is (R)-adrenaline + O2 + H2O = (R)-3,4-dihydroxymandelaldehyde + methylamine + H2O2. The enzyme catalyses a primary methyl amine + O2 + H2O = an aldehyde + H2O2 + NH4(+). It catalyses the reaction dopamine + O2 + H2O = 3,4-dihydroxyphenylacetaldehyde + H2O2 + NH4(+). It carries out the reaction tyramine + O2 + H2O = (4-hydroxyphenyl)acetaldehyde + H2O2 + NH4(+). The catalysed reaction is (R)-noradrenaline + O2 + H2O = (R)-3,4-dihydroxymandelaldehyde + H2O2 + NH4(+). The enzyme catalyses benzylamine + O2 + H2O = benzaldehyde + H2O2 + NH4(+). It catalyses the reaction 2-phenylethylamine + O2 + H2O = 2-phenylacetaldehyde + H2O2 + NH4(+). It carries out the reaction N-acetylputrescine + O2 + H2O = 4-acetamidobutanal + H2O2 + NH4(+). Catalyzes the oxidative deamination of primary and some secondary amines such as neurotransmitters, and exogenous amines including the tertiary amine, neurotoxin 1-methyl-4-phenyl-1,2,3,6-tetrahydropyridine (MPTP), with concomitant reduction of oxygen to hydrogen peroxide and participates in the metabolism of neuroactive and vasoactive amines in the central nervous system and peripheral tissues. Preferentially degrades benzylamine and phenylethylamine. This is Amine oxidase [flavin-containing] B from Rattus norvegicus (Rat).